The sequence spans 450 residues: Ribulose bisphosphate carboxylase large chain (450 aa).

Position 4 is an N6,N6,N6-trimethyllysine (K4). Residues N113 and T163 each coordinate substrate. The active-site Proton acceptor is K165. K167 lines the substrate pocket. K191, D193, and E194 together coordinate Mg(2+). The residue at position 191 (K191) is an N6-carboxylysine. The Proton acceptor role is filled by H284. 3 residues coordinate substrate: R285, H317, and S369.

This sequence belongs to the RuBisCO large chain family. Type I subfamily. As to quaternary structure, heterohexadecamer of 8 large chains and 8 small chains; disulfide-linked. The disulfide link is formed within the large subunit homodimers. Mg(2+) serves as cofactor. In terms of processing, the disulfide bond which can form in the large chain dimeric partners within the hexadecamer appears to be associated with oxidative stress and protein turnover.

It is found in the plastid. The protein localises to the chloroplast. It carries out the reaction 2 (2R)-3-phosphoglycerate + 2 H(+) = D-ribulose 1,5-bisphosphate + CO2 + H2O. The enzyme catalyses D-ribulose 1,5-bisphosphate + O2 = 2-phosphoglycolate + (2R)-3-phosphoglycerate + 2 H(+). Functionally, ruBisCO catalyzes two reactions: the carboxylation of D-ribulose 1,5-bisphosphate, the primary event in carbon dioxide fixation, as well as the oxidative fragmentation of the pentose substrate in the photorespiration process. Both reactions occur simultaneously and in competition at the same active site. In Sedum rubrotinctum (Jelly bean plant), this protein is Ribulose bisphosphate carboxylase large chain.